Consider the following 201-residue polypeptide: ADP-ribosylation factor-related protein 1 (201 aa).

Met1 bears the N-acetylmethionine mark. GTP is bound by residues 24–31, 75–79, and 134–137; these read GLDNAGKT, DLGGQ, and NKQD.

Belongs to the small GTPase superfamily. Arf family. Interacts with SYS1.

The protein resides in the golgi apparatus. It localises to the trans-Golgi network. In terms of biological role, trans-Golgi-associated GTPase that regulates protein sorting. Controls the targeting of ARL1 and its effector to the trans-Golgi. Required for the lipidation of chylomicrons in the intestine and required for VLDL lipidation in the liver. The sequence is that of ADP-ribosylation factor-related protein 1 (Arfrp1) from Mus musculus (Mouse).